The following is a 243-amino-acid chain: Probable transcriptional regulatory protein PTH_1024 (243 aa).

It belongs to the TACO1 family.

Its subcellular location is the cytoplasm. In Pelotomaculum thermopropionicum (strain DSM 13744 / JCM 10971 / SI), this protein is Probable transcriptional regulatory protein PTH_1024.